The sequence spans 128 residues: Fluoride-specific ion channel FluC (128 aa).

4 helical membrane-spanning segments follow: residues 7–29 (LNFI…LGLR), 36–57 (PWGT…VALI), 65–94 (AWIR…DMLE), and 98–126 (YATA…VRLL). Asparagine 43 contributes to the fluoride binding site. Residues glycine 77 and threonine 80 each contribute to the Na(+) site. Tyrosine 104, serine 108, and serine 112 together coordinate fluoride.

This sequence belongs to the fluoride channel Fluc/FEX (TC 1.A.43) family. As to quaternary structure, homodimer.

The protein resides in the cell inner membrane. The catalysed reaction is fluoride(in) = fluoride(out). Na(+) is not transported, but it plays an essential structural role and its presence is essential for fluoride channel function. The Na(+)-binding site is specific for Na(+) over most other cations including K(+) and Mg(2+). Fluoride efflux is inhibited by Li(2+). Functionally, fluoride-specific ion channel. Important for reducing fluoride concentration in the cell, thus reducing its toxicity. Is highly specific for fluoride ions and cannot transport chloride ions. This chain is Fluoride-specific ion channel FluC, found in Bordetella pertussis (strain Tohama I / ATCC BAA-589 / NCTC 13251).